A 201-amino-acid chain; its full sequence is Recombination protein RecR (201 aa).

The C4-type zinc-finger motif lies at 60–75 (CSCCGNVDTSDPCTIC). In terms of domain architecture, Toprim spans 83 to 178 (ATLIVVEDVS…RVTRLAHGVP (96 aa)).

Belongs to the RecR family.

Functionally, may play a role in DNA repair. It seems to be involved in an RecBC-independent recombinational process of DNA repair. It may act with RecF and RecO. In Brucella abortus biovar 1 (strain 9-941), this protein is Recombination protein RecR.